The following is a 168-amino-acid chain: Ribosome maturation factor RimM (168 aa).

The 76-residue stretch at 93-168 (EDEFYQSDLV…IVLNIPEFID (76 aa)) folds into the PRC barrel domain.

Belongs to the RimM family. Binds ribosomal protein uS19.

It localises to the cytoplasm. Its function is as follows. An accessory protein needed during the final step in the assembly of 30S ribosomal subunit, possibly for assembly of the head region. Essential for efficient processing of 16S rRNA. May be needed both before and after RbfA during the maturation of 16S rRNA. It has affinity for free ribosomal 30S subunits but not for 70S ribosomes. In Wolbachia pipientis wMel, this protein is Ribosome maturation factor RimM.